Here is a 311-residue protein sequence, read N- to C-terminus: Ciliary microtubule inner protein 2B (311 aa).

Disordered stretches follow at residues Pro64 to Pro93 and Gln150 to Met183.

It belongs to the CIMIP2 family. In terms of tissue distribution, expressed in airway epithelial cells.

It is found in the cytoplasm. The protein localises to the cytoskeleton. The protein resides in the cilium axoneme. In terms of biological role, microtubule inner protein (MIP) part of the dynein-decorated doublet microtubules (DMTs) in cilia axoneme, which is required for motile cilia beating. This is Ciliary microtubule inner protein 2B (cimip2b) from Xenopus laevis (African clawed frog).